The primary structure comprises 650 residues: Pentatricopeptide repeat-containing protein At1g51965, mitochondrial (650 aa).

The N-terminal 23 residues, 1-23 (MKLLRRRFFNSVNTITRPNRRHY), are a transit peptide targeting the mitochondrion. PPR repeat units lie at residues 132–169 (DPFL…NVHG), 170–200 (NIST…WDLK), 202–236 (NSFT…GHKL), 237–267 (DIFA…RHCR), 269–303 (DEYT…GLTL), 304–338 (NVVG…GCRP), 339–369 (NEYT…SKRY), 371–405 (TQGI…PVKG), 406–440 (ERDS…GVVT), 441–475 (DTMM…GPSP), 476–510 (DIFT…DCKP), 511–545 (DIIS…GLNP), 546–580 (DVVT…GCQP), and 581–615 (NIVT…GLTP).

The protein belongs to the PPR family. P subfamily.

The protein localises to the mitochondrion. In Arabidopsis thaliana (Mouse-ear cress), this protein is Pentatricopeptide repeat-containing protein At1g51965, mitochondrial.